Consider the following 417-residue polypeptide: NADH-quinone oxidoreductase subunit D (417 aa).

This sequence belongs to the complex I 49 kDa subunit family. In terms of assembly, NDH-1 is composed of 14 different subunits. Subunits NuoB, C, D, E, F, and G constitute the peripheral sector of the complex.

The protein resides in the cell inner membrane. The enzyme catalyses a quinone + NADH + 5 H(+)(in) = a quinol + NAD(+) + 4 H(+)(out). In terms of biological role, NDH-1 shuttles electrons from NADH, via FMN and iron-sulfur (Fe-S) centers, to quinones in the respiratory chain. The immediate electron acceptor for the enzyme in this species is believed to be ubiquinone. Couples the redox reaction to proton translocation (for every two electrons transferred, four hydrogen ions are translocated across the cytoplasmic membrane), and thus conserves the redox energy in a proton gradient. This chain is NADH-quinone oxidoreductase subunit D, found in Francisella tularensis subsp. mediasiatica (strain FSC147).